A 1222-amino-acid chain; its full sequence is Alpha-mannosidase D (1222 aa).

Positions M1–T21 are cleaved as a signal peptide. Residues F22–L1170 are Extracellular-facing. Residues H71 and D73 each coordinate Zn(2+). N175 carries an N-linked (GlcNAc...) asparagine glycan. Zn(2+) contacts are provided by D185 and H453. D185 serves as the catalytic Nucleophile. N-linked (GlcNAc...) asparagine glycans are attached at residues N492, N496, N547, N551, N566, N613, N665, N768, N785, N952, N981, N1069, and N1084. Residues K493–T549 show a composition bias toward low complexity. Residues K493–E554 are disordered. The chain crosses the membrane as a helical span at residues I1171–V1191. The Cytoplasmic segment spans residues T1192 to P1222. Residues L1202–L1211 are compositionally biased toward low complexity. The segment at L1202–P1222 is disordered. Over residues I1212–P1222 the composition is skewed to polar residues.

It belongs to the glycosyl hydrolase 38 family. It depends on Zn(2+) as a cofactor.

The protein resides in the membrane. The catalysed reaction is Hydrolysis of terminal, non-reducing alpha-D-mannose residues in alpha-D-mannosides.. The polypeptide is Alpha-mannosidase D (manD) (Dictyostelium discoideum (Social amoeba)).